We begin with the raw amino-acid sequence, 348 residues long: Lipoyl synthase (348 aa).

Residues C55, C60, C66, C81, C85, C88, and S292 each contribute to the [4Fe-4S] cluster site. Residues W67 to A281 form the Radical SAM core domain.

It belongs to the radical SAM superfamily. Lipoyl synthase family. [4Fe-4S] cluster serves as cofactor.

It localises to the cytoplasm. The enzyme catalyses [[Fe-S] cluster scaffold protein carrying a second [4Fe-4S](2+) cluster] + N(6)-octanoyl-L-lysyl-[protein] + 2 oxidized [2Fe-2S]-[ferredoxin] + 2 S-adenosyl-L-methionine + 4 H(+) = [[Fe-S] cluster scaffold protein] + N(6)-[(R)-dihydrolipoyl]-L-lysyl-[protein] + 4 Fe(3+) + 2 hydrogen sulfide + 2 5'-deoxyadenosine + 2 L-methionine + 2 reduced [2Fe-2S]-[ferredoxin]. Its pathway is protein modification; protein lipoylation via endogenous pathway; protein N(6)-(lipoyl)lysine from octanoyl-[acyl-carrier-protein]: step 2/2. Catalyzes the radical-mediated insertion of two sulfur atoms into the C-6 and C-8 positions of the octanoyl moiety bound to the lipoyl domains of lipoate-dependent enzymes, thereby converting the octanoylated domains into lipoylated derivatives. This Corynebacterium glutamicum (strain R) protein is Lipoyl synthase.